A 267-amino-acid chain; its full sequence is Undecaprenyl-diphosphatase (267 aa).

Transmembrane regions (helical) follow at residues 1-21 (MTLW…FLPI), 39-59 (AGVA…LFYY), 85-105 (AKLG…GFMV), 117-137 (LLIA…DFWG), 189-209 (FSFL…LWKL), 220-240 (LIAL…ALFI), and 246-266 (VGMM…FFVF).

This sequence belongs to the UppP family.

It localises to the cell inner membrane. The catalysed reaction is di-trans,octa-cis-undecaprenyl diphosphate + H2O = di-trans,octa-cis-undecaprenyl phosphate + phosphate + H(+). In terms of biological role, catalyzes the dephosphorylation of undecaprenyl diphosphate (UPP). Confers resistance to bacitracin. This Dichelobacter nodosus (strain VCS1703A) protein is Undecaprenyl-diphosphatase.